Reading from the N-terminus, the 392-residue chain is Protein trapped in endoderm-1 (392 aa).

Residues 1–39 (MDQDMGMATGYFQDADMQMDEPAAATQSIYPHSATLFAA) are Extracellular-facing. The helical transmembrane segment at 40 to 60 (ISACVFVTIGVLGNLITLLAL) threads the bilayer. Residues 61–73 (LKSPTIREHATTA) lie on the Cytoplasmic side of the membrane. The helical transmembrane segment at 74-94 (FVISLSISDLLFCSFSLPLTA) threads the bilayer. Residues 95–110 (VRFFQESWTFGTTLCK) lie on the Extracellular side of the membrane. Residues 111–131 (IFPVIFYGNVAVSLLSMVGIT) form a helical membrane-spanning segment. Residues 132 to 156 (LNRYILIACHSRYSQIYKPKFITLQ) are Cytoplasmic-facing. Residues 157–177 (LLFVWAVSFLLLLPPILGIWG) traverse the membrane as a helical segment. The Extracellular portion of the chain corresponds to 178–202 (EMGLDEATFSCTILKKEGRSIKKTL). The chain crosses the membrane as a helical span at residues 203-223 (FVIGFLLPCLVIIVSYSCIYI). Over 224 to 268 (TVLHQKKKIRNHDNFQIAAAKGSSSSGGGSYMTTTCTRKAREDNR) the chain is Cytoplasmic. A helical transmembrane segment spans residues 269–289 (LTVMMVTIFLCFLVCFLPLML). The Extracellular portion of the chain corresponds to 290–302 (ANVVDDERNTSYP). N-linked (GlcNAc...) asparagine glycosylation is present at Asn-298. Residues 303–323 (WLHIIASVMAWASSVINPIIY) traverse the membrane as a helical segment. Topologically, residues 324–392 (AASNRNYRVA…INQMCQTYSV (69 aa)) are cytoplasmic. Residues Ser-359, Ser-362, and Ser-366 each carry the phosphoserine modification. Thr-372 carries the phosphothreonine modification.

This sequence belongs to the G-protein coupled receptor 1 family. In embryos, expression is seen at highest levels in the cuprophilic cells and at lower levels in the amnioserosa, developing CNS, cardiac mesoderm primordium and midline glia.

The protein resides in the cell membrane. Essential for the first active step of germ cell migration: transepithelial migration of germ cells through the posterior midgut (PMG) epithelium. In Drosophila melanogaster (Fruit fly), this protein is Protein trapped in endoderm-1 (Tre1).